A 550-amino-acid polypeptide reads, in one-letter code: Undecaprenyl phosphate-alpha-4-amino-4-deoxy-L-arabinose arabinosyl transferase 2 (550 aa).

11 helical membrane passes run 4–24 (LKPG…PLSF), 81–101 (FAVH…VYWL), 110–132 (WLGL…GTYA), 176–196 (FMTK…PWVI), 204–224 (VFIY…PWVI), 255–275 (APFW…LGLL), 288–308 (TQSG…FFSL), 313–333 (LPTY…RYAA), 348–368 (LLFG…WGLA), 381–401 (VLLG…TLRA), and 409–429 (AALC…QQVI).

It belongs to the glycosyltransferase 83 family.

The protein localises to the cell inner membrane. The enzyme catalyses 4-amino-4-deoxy-alpha-L-arabinopyranosyl di-trans,octa-cis-undecaprenyl phosphate + lipid IVA = lipid IIA + di-trans,octa-cis-undecaprenyl phosphate.. It participates in lipopolysaccharide metabolism; 4-amino-4-deoxy-beta-L-arabinose-lipid A biosynthesis. Catalyzes the transfer of the L-Ara4N moiety of the glycolipid undecaprenyl phosphate-alpha-L-Ara4N to lipid A. The modified arabinose is attached to lipid A and is required for resistance to polymyxin and cationic antimicrobial peptides. The sequence is that of Undecaprenyl phosphate-alpha-4-amino-4-deoxy-L-arabinose arabinosyl transferase 2 from Sodalis glossinidius (strain morsitans).